The following is a 173-amino-acid chain: NADH-quinone oxidoreductase subunit B 2 (173 aa).

[4Fe-4S] cluster is bound by residues Cys42, Cys43, Cys107, and Cys137.

This sequence belongs to the complex I 20 kDa subunit family. In terms of assembly, NDH-1 is composed of 14 different subunits. Subunits NuoB, C, D, E, F, and G constitute the peripheral sector of the complex. Requires [4Fe-4S] cluster as cofactor.

Its subcellular location is the cell inner membrane. The enzyme catalyses a quinone + NADH + 5 H(+)(in) = a quinol + NAD(+) + 4 H(+)(out). NDH-1 shuttles electrons from NADH, via FMN and iron-sulfur (Fe-S) centers, to quinones in the respiratory chain. Couples the redox reaction to proton translocation (for every two electrons transferred, four hydrogen ions are translocated across the cytoplasmic membrane), and thus conserves the redox energy in a proton gradient. The polypeptide is NADH-quinone oxidoreductase subunit B 2 (Anaeromyxobacter dehalogenans (strain 2CP-C)).